The chain runs to 223 residues: Cytidylate kinase (223 aa).

Residue 11–19 (GPAGVGKST) coordinates ATP.

This sequence belongs to the cytidylate kinase family. Type 1 subfamily.

It localises to the cytoplasm. The catalysed reaction is CMP + ATP = CDP + ADP. It carries out the reaction dCMP + ATP = dCDP + ADP. This chain is Cytidylate kinase, found in Maridesulfovibrio salexigens (strain ATCC 14822 / DSM 2638 / NCIMB 8403 / VKM B-1763) (Desulfovibrio salexigens).